We begin with the raw amino-acid sequence, 314 residues long: MKALTKTDFNFPGQKSVYHGKVRDVYNINGEQLVMVATDRISAFDVVLPEGIPYKGQMLNQIAAKFLDATTDICPNWKLATPDPMVTVGVLCEGFPVEMIVRGYLCGSAWRAYKNGVREICGVKLPEGMKENQKFPEPIVTPTTKAEMGLHDEDISKEEILAQGLATPEEYAILEKYTLALFKRGTEIAAERGLILVDTKYEFGKHNGTIYLMDEIHTPDSSRYFYAEGYQERFEKGEAQKQLSKEFVREWLMENGFQGKEGQKVPEMTPAIVESISERYIELFENITGEKFVKEDTSNIAERIEKNVMAFLAK.

It belongs to the SAICAR synthetase family.

It catalyses the reaction 5-amino-1-(5-phospho-D-ribosyl)imidazole-4-carboxylate + L-aspartate + ATP = (2S)-2-[5-amino-1-(5-phospho-beta-D-ribosyl)imidazole-4-carboxamido]succinate + ADP + phosphate + 2 H(+). It functions in the pathway purine metabolism; IMP biosynthesis via de novo pathway; 5-amino-1-(5-phospho-D-ribosyl)imidazole-4-carboxamide from 5-amino-1-(5-phospho-D-ribosyl)imidazole-4-carboxylate: step 1/2. This is Phosphoribosylaminoimidazole-succinocarboxamide synthase from Bacteroides fragilis (strain ATCC 25285 / DSM 2151 / CCUG 4856 / JCM 11019 / LMG 10263 / NCTC 9343 / Onslow / VPI 2553 / EN-2).